The sequence spans 284 residues: 2-dehydro-3-deoxyphosphooctonate aldolase (284 aa).

The protein belongs to the KdsA family.

It localises to the cytoplasm. It catalyses the reaction D-arabinose 5-phosphate + phosphoenolpyruvate + H2O = 3-deoxy-alpha-D-manno-2-octulosonate-8-phosphate + phosphate. Its pathway is carbohydrate biosynthesis; 3-deoxy-D-manno-octulosonate biosynthesis; 3-deoxy-D-manno-octulosonate from D-ribulose 5-phosphate: step 2/3. The protein operates within bacterial outer membrane biogenesis; lipopolysaccharide biosynthesis. In Histophilus somni (strain 129Pt) (Haemophilus somnus), this protein is 2-dehydro-3-deoxyphosphooctonate aldolase.